The sequence spans 190 residues: Adenine phosphoribosyltransferase (190 aa).

This sequence belongs to the purine/pyrimidine phosphoribosyltransferase family. In terms of assembly, homodimer.

The protein localises to the cytoplasm. It catalyses the reaction AMP + diphosphate = 5-phospho-alpha-D-ribose 1-diphosphate + adenine. It participates in purine metabolism; AMP biosynthesis via salvage pathway; AMP from adenine: step 1/1. Its function is as follows. Catalyzes a salvage reaction resulting in the formation of AMP, that is energically less costly than de novo synthesis. The sequence is that of Adenine phosphoribosyltransferase from Cupriavidus taiwanensis (strain DSM 17343 / BCRC 17206 / CCUG 44338 / CIP 107171 / LMG 19424 / R1) (Ralstonia taiwanensis (strain LMG 19424)).